The primary structure comprises 361 residues: Peptide chain release factor 1 (361 aa).

Q236 is subject to N5-methylglutamine. Residues 285–309 (NAKDSARAADRKAQVGSGDRSERIR) are compositionally biased toward basic and acidic residues. The interval 285–312 (NAKDSARAADRKAQVGSGDRSERIRTYN) is disordered.

This sequence belongs to the prokaryotic/mitochondrial release factor family. In terms of processing, methylated by PrmC. Methylation increases the termination efficiency of RF1.

It is found in the cytoplasm. Peptide chain release factor 1 directs the termination of translation in response to the peptide chain termination codons UAG and UAA. The chain is Peptide chain release factor 1 from Methylobacterium radiotolerans (strain ATCC 27329 / DSM 1819 / JCM 2831 / NBRC 15690 / NCIMB 10815 / 0-1).